The chain runs to 153 residues: Putative trans-acting regulator pXO2-62/BXB0076/GBAA_pXO2_0076 (153 aa).

It belongs to the AtxA/AcpA family.

The sequence is that of Putative trans-acting regulator pXO2-62/BXB0076/GBAA_pXO2_0076 from Bacillus anthracis.